Consider the following 1574-residue polypeptide: Plexin-C1 (1574 aa).

The N-terminal stretch at 1-34 is a signal peptide; sequence MEVSRRKTPPRPPYPAAPLPLIAYLLALAAPARG. The region spanning 35 to 452 is the Sema domain; the sequence is ADEPVWRSEQ…AGKEVRRIPV (418 aa). Residues 35–950 lie on the Extracellular side of the membrane; that stretch reads ADEPVWRSEQ…YVEQESVPST (916 aa). Cysteines 64 and 87 form a disulfide. Asn86, Asn143, and Asn149 each carry an N-linked (GlcNAc...) asparagine glycan. Cys156 and Cys194 are joined by a disulfide. N-linked (GlcNAc...) asparagine glycosylation is present at Asn252. A disulfide bridge connects residues Cys283 and Cys329. 2 N-linked (GlcNAc...) asparagine glycosylation sites follow: Asn386 and Asn407. Cystine bridges form between Cys455–Cys472, Cys461–Cys506, Cys464–Cys481, and Cys475–Cys487. Asn694, Asn773, and Asn802 each carry an N-linked (GlcNAc...) asparagine glycan. A helical membrane pass occupies residues 951 to 971; it reads WYFLIALPILLAIVIVVAVVV. Topologically, residues 972-1574 are cytoplasmic; sequence TRYKSKELSR…FDEKKKCKWM (603 aa). Ser984 is modified (phosphoserine).

Belongs to the plexin family. Monomer. Homodimer. Interacts with SEMA7A. Detected on dendritic cells, skin Langerhans cells and neutrophils (at protein level).

It is found in the membrane. Functionally, receptor for SEMA7A, for vaccinia virus semaphorin A39R and for herpesvirus Sema protein. Binding of semaphorins triggers cellular responses leading to the rearrangement of the cytoskeleton and to secretion of IL6 and IL8. This Mus musculus (Mouse) protein is Plexin-C1 (Plxnc1).